Here is a 602-residue protein sequence, read N- to C-terminus: Sodium-independent sulfate anion transporter (602 aa).

The Extracellular portion of the chain corresponds to 1-47; it reads MSPPMSPMKPPKGFAPMSCCWSTETMQKWLPFLGWLPDYTWYALKMD. The chain crosses the membrane as a helical span at residues 48-68; sequence FIAGISVGLTVIPQALAYAEV. Residue Ala69 is a topological domain, cytoplasmic. A helical membrane pass occupies residues 70–90; it reads GLPPQYGLYSAFMGCFVYFFL. Topologically, residues 91-115 are extracellular; the sequence is GTSRDVTLGPTAIMSLLVSFYTFHE. Residues 116 to 136 form a helical membrane-spanning segment; sequence PAYAVLLAFLTGCIQLGMGFL. The Cytoplasmic segment spans residues 137-143; that stretch reads RLGLLLD. Residues 144–164 traverse the membrane as a helical segment; it reads FISCPVIKGFTSAAAIIIGFG. Topologically, residues 165 to 193 are extracellular; the sequence is QIKNLLGLQHIPRQFFLQVYYTFHNIGET. The chain crosses the membrane as a helical span at residues 194-214; the sequence is RVGDAVLGLVCMVLLLVLKLM. The Cytoplasmic segment spans residues 215 to 246; that stretch reads RDHVPPVHPEMPTGVRLSHGLVWTATTARNAL. The helical transmembrane segment at 247 to 267 threads the bilayer; that stretch reads VVSFAALVAYSFQVTGYQPFV. The Extracellular portion of the chain corresponds to 268–300; sequence LTGKTPEGLPDAHIPPFSVTTANGTISFTEMVQ. Residues 301–321 traverse the membrane as a helical segment; that stretch reads GMGAGLVVVPLMGLLESIAVA. The Cytoplasmic portion of the chain corresponds to 322–337; it reads KSFASQNNYRINSNQE. A helical transmembrane segment spans residues 338 to 358; sequence LLALGFTNILGSLFSSYPVTG. At 359–370 the chain is on the extracellular side; it reads SFGRTAVNAQSG. Residues 371 to 391 traverse the membrane as a helical segment; the sequence is VCTPAGGLMTGALVLLSLDYL. Topologically, residues 392–394 are cytoplasmic; that stretch reads TSL. A helical membrane pass occupies residues 395-415; it reads FYYIPKSALAAVIIMAVVPLF. Residues 416 to 438 lie on the Extracellular side of the membrane; the sequence is DTKIVKTLWRVKRLDLLPLCVTF. Residues 439–459 traverse the membrane as a helical segment; it reads LLCFWEVQYGILAGTLVSVLI. Over 460-602 the chain is Cytoplasmic; sequence LLHSVARPKI…PEHKIALLKA (143 aa). Residues 466–580 form the STAS domain; the sequence is RPKIQVSEGP…EAEKYLKQEP (115 aa).

Belongs to the SLC26A/SulP transporter (TC 2.A.53) family.

Its subcellular location is the cell membrane. The protein localises to the lysosome membrane. It is found in the apical cell membrane. The protein resides in the basolateral cell membrane. It carries out the reaction hydrogencarbonate(in) + chloride(out) = hydrogencarbonate(out) + chloride(in). The enzyme catalyses sulfate(in) + H(+)(in) = sulfate(out) + H(+)(out). The catalysed reaction is oxalate(in) + chloride(out) = oxalate(out) + chloride(in). Functionally, sodium-independent anion exchanger mediating bicarbonate, chloride, sulfate and oxalate transport. Exhibits sodium-independent sulfate anion transporter activity that may cooperate with SLC26A2 to mediate DIDS-sensitive sulfate uptake into high endothelial venules endothelial cells (HEVEC). In the kidney, mediates chloride-bicarbonate exchange, facilitating V-ATPase-mediated acid secretion. May function as a chloride channel, playing an important role in moderating chloride homeostasis and neuronal activity in the cerebellum. The sequence is that of Sodium-independent sulfate anion transporter from Bos taurus (Bovine).